Consider the following 377-residue polypeptide: Phosphoserine aminotransferase (377 aa).

Residue arginine 43 coordinates L-glutamate. Positions 105, 164, 189, and 212 each coordinate pyridoxal 5'-phosphate. At lysine 213 the chain carries N6-(pyridoxal phosphate)lysine. A pyridoxal 5'-phosphate-binding site is contributed by 254-255 (NT).

The protein belongs to the class-V pyridoxal-phosphate-dependent aminotransferase family. SerC subfamily. In terms of assembly, homodimer. The cofactor is pyridoxal 5'-phosphate.

It localises to the cytoplasm. It carries out the reaction O-phospho-L-serine + 2-oxoglutarate = 3-phosphooxypyruvate + L-glutamate. The enzyme catalyses 4-(phosphooxy)-L-threonine + 2-oxoglutarate = (R)-3-hydroxy-2-oxo-4-phosphooxybutanoate + L-glutamate. It functions in the pathway amino-acid biosynthesis; L-serine biosynthesis; L-serine from 3-phospho-D-glycerate: step 2/3. The protein operates within cofactor biosynthesis; pyridoxine 5'-phosphate biosynthesis; pyridoxine 5'-phosphate from D-erythrose 4-phosphate: step 3/5. In terms of biological role, catalyzes the reversible conversion of 3-phosphohydroxypyruvate to phosphoserine and of 3-hydroxy-2-oxo-4-phosphonooxybutanoate to phosphohydroxythreonine. The chain is Phosphoserine aminotransferase from Bordetella pertussis (strain Tohama I / ATCC BAA-589 / NCTC 13251).